Consider the following 253-residue polypeptide: Sulfate transporter CysZ (253 aa).

Helical transmembrane passes span 31 to 51 (FVIL…WWLF), 75 to 95 (LLWP…FSTI), 151 to 171 (IVLL…PVLW), and 222 to 242 (IPLL…AMWV).

The protein belongs to the CysZ family.

The protein localises to the cell inner membrane. Functionally, high affinity, high specificity proton-dependent sulfate transporter, which mediates sulfate uptake. Provides the sulfur source for the cysteine synthesis pathway. This Shigella flexneri protein is Sulfate transporter CysZ.